Consider the following 219-residue polypeptide: tRNA (guanine-N(7)-)-methyltransferase (219 aa).

S-adenosyl-L-methionine is bound by residues Glu-46, Glu-71, Asn-100, and Asp-122. Asp-122 is an active-site residue. Substrate is bound by residues Lys-126, Asp-158, and 199–202 (TEYE).

Belongs to the class I-like SAM-binding methyltransferase superfamily. TrmB family.

The catalysed reaction is guanosine(46) in tRNA + S-adenosyl-L-methionine = N(7)-methylguanosine(46) in tRNA + S-adenosyl-L-homocysteine. The protein operates within tRNA modification; N(7)-methylguanine-tRNA biosynthesis. Functionally, catalyzes the formation of N(7)-methylguanine at position 46 (m7G46) in tRNA. In Leuconostoc mesenteroides subsp. mesenteroides (strain ATCC 8293 / DSM 20343 / BCRC 11652 / CCM 1803 / JCM 6124 / NCDO 523 / NBRC 100496 / NCIMB 8023 / NCTC 12954 / NRRL B-1118 / 37Y), this protein is tRNA (guanine-N(7)-)-methyltransferase.